A 377-amino-acid polypeptide reads, in one-letter code: Dual-specificity RNA methyltransferase RlmN (377 aa).

The Proton acceptor role is filled by glutamate 102. Residues 108-345 (EPDRRTLCVS…AVVRKNRGGD (238 aa)) form the Radical SAM core domain. A disulfide bridge links cysteine 115 with cysteine 350. Residues cysteine 122, cysteine 126, and cysteine 129 each coordinate [4Fe-4S] cluster. Residues 177–178 (GE), serine 209, 231–233 (SLN), and asparagine 307 contribute to the S-adenosyl-L-methionine site. Cysteine 350 serves as the catalytic S-methylcysteine intermediate. Residues 354-377 (AAEGGPGDPRRPAPPPLTRLPAAG) form a disordered region.

Belongs to the radical SAM superfamily. RlmN family. [4Fe-4S] cluster is required as a cofactor.

The protein resides in the cytoplasm. It carries out the reaction adenosine(2503) in 23S rRNA + 2 reduced [2Fe-2S]-[ferredoxin] + 2 S-adenosyl-L-methionine = 2-methyladenosine(2503) in 23S rRNA + 5'-deoxyadenosine + L-methionine + 2 oxidized [2Fe-2S]-[ferredoxin] + S-adenosyl-L-homocysteine. The catalysed reaction is adenosine(37) in tRNA + 2 reduced [2Fe-2S]-[ferredoxin] + 2 S-adenosyl-L-methionine = 2-methyladenosine(37) in tRNA + 5'-deoxyadenosine + L-methionine + 2 oxidized [2Fe-2S]-[ferredoxin] + S-adenosyl-L-homocysteine. Specifically methylates position 2 of adenine 2503 in 23S rRNA and position 2 of adenine 37 in tRNAs. m2A2503 modification seems to play a crucial role in the proofreading step occurring at the peptidyl transferase center and thus would serve to optimize ribosomal fidelity. This chain is Dual-specificity RNA methyltransferase RlmN, found in Anaeromyxobacter sp. (strain Fw109-5).